The primary structure comprises 399 residues: Tyrosine--tRNA ligase (399 aa).

A 'HIGH' region motif is present at residues 42-51; the sequence is PTAPDLHLGH. Residues 226-230 carry the 'KMSKS' region motif; it reads KMSKS. ATP is bound at residue Lys229. Positions 336–396 constitute an S4 RNA-binding domain; the sequence is MPIAAVLNKA…GRKAFARITL (61 aa).

This sequence belongs to the class-I aminoacyl-tRNA synthetase family. TyrS type 2 subfamily. In terms of assembly, homodimer.

The protein localises to the cytoplasm. The enzyme catalyses tRNA(Tyr) + L-tyrosine + ATP = L-tyrosyl-tRNA(Tyr) + AMP + diphosphate + H(+). Catalyzes the attachment of tyrosine to tRNA(Tyr) in a two-step reaction: tyrosine is first activated by ATP to form Tyr-AMP and then transferred to the acceptor end of tRNA(Tyr). This chain is Tyrosine--tRNA ligase, found in Pseudomonas fluorescens (strain ATCC BAA-477 / NRRL B-23932 / Pf-5).